A 245-amino-acid chain; its full sequence is MKIDLNADLGEGCANDQALLQLVSSANIACGFHAGDAQTMRQSVRWALEYGVAIGAHPSFPDRENFGRTAMQLPPETVYAQVVYQLGALAAIVQVEGGVMQHVKPHGMLYNQAAVDPLLADAIAQAVKAVDPSLRLVGLAGSELIRAGTRVGLVTRQEVFADRHYQPDGTLVPRSQPDALIESDELALSQTLAMVQQHQVQACDGSWVQVQADTVCVHGDGVQALAFARCLRDRFQQEGISVIAQ.

It belongs to the LamB/PxpA family. In terms of assembly, forms a complex composed of PxpA, PxpB and PxpC.

It catalyses the reaction 5-oxo-L-proline + ATP + 2 H2O = L-glutamate + ADP + phosphate + H(+). Functionally, catalyzes the cleavage of 5-oxoproline to form L-glutamate coupled to the hydrolysis of ATP to ADP and inorganic phosphate. This chain is 5-oxoprolinase subunit A, found in Yersinia pseudotuberculosis serotype O:1b (strain IP 31758).